The primary structure comprises 749 residues: Photosystem I P700 chlorophyll a apoprotein A1 (749 aa).

Helical transmembrane passes span 70-93, 156-179, 195-219, 291-309, 346-369, 385-411, 433-455, and 531-549; these read VFSA…FHGA, LYAT…FHYH, LNHH…HVSL, TAHH…GHMY, WHAQ…HHMY, LSLF…IFLV, AIIS…LYIH, and FLVH…LILL. The [4Fe-4S] cluster site is built by cysteine 573 and cysteine 582. The next 2 membrane-spanning stretches (helical) occupy residues 589-610 and 663-685; these read HVFL…HFSW and LSAY…MFLF. Histidine 674 is a binding site for chlorophyll a'. The chlorophyll a site is built by methionine 682 and tyrosine 690. Tryptophan 691 provides a ligand contact to phylloquinone. Residues 723–743 form a helical membrane-spanning segment; sequence AVGVAHYLLGGIATTWAFFLA.

This sequence belongs to the PsaA/PsaB family. In terms of assembly, the PsaA/B heterodimer binds the P700 chlorophyll special pair and subsequent electron acceptors. PSI consists of a core antenna complex that captures photons, and an electron transfer chain that converts photonic excitation into a charge separation. The eukaryotic PSI reaction center is composed of at least 11 subunits. P700 is a chlorophyll a/chlorophyll a' dimer, A0 is one or more chlorophyll a, A1 is one or both phylloquinones and FX is a shared 4Fe-4S iron-sulfur center. serves as cofactor.

It localises to the plastid. The protein localises to the chloroplast thylakoid membrane. It carries out the reaction reduced [plastocyanin] + hnu + oxidized [2Fe-2S]-[ferredoxin] = oxidized [plastocyanin] + reduced [2Fe-2S]-[ferredoxin]. Its function is as follows. PsaA and PsaB bind P700, the primary electron donor of photosystem I (PSI), as well as the electron acceptors A0, A1 and FX. PSI is a plastocyanin-ferredoxin oxidoreductase, converting photonic excitation into a charge separation, which transfers an electron from the donor P700 chlorophyll pair to the spectroscopically characterized acceptors A0, A1, FX, FA and FB in turn. Oxidized P700 is reduced on the lumenal side of the thylakoid membrane by plastocyanin. The protein is Photosystem I P700 chlorophyll a apoprotein A1 of Zygnema circumcarinatum (Green alga).